Here is a 613-residue protein sequence, read N- to C-terminus: MLAGEASMRSPILACWQPILLLMLGSILSGSATGCPPRCECSAQERAVLCHRKRFMVVPEGIPTETRQLDLGKNRIKTLNQDEFANYPHLEELELNENIISAIEPGAFNNLFNLRTLGLRSNRLKLIPLGVFTGLSNLTKLDISENKIVILLDYMFQDLYNLKSLEVGDNDLVYISHRAFSGLNSLEQLTLEKCNLTSIPTEALSHLHGLIVLRLRHLNINAIRDYSFKRLYRLKVLEISHWPYLDTMTSNCLYGLNLTSLSITHCNLTSIPYVSVRHLVYLRFLNLSYNPIVTIEGSMLHDLLRLQEIQLVGGQLTTVEPFAFRGLNYLRILNVSGNLLTTLEESAFHSVGNLETLILDNNPLACDCRLLWVFRRRWRLNFNKQQPTCSTPEFVQGKEFKDFPDVLLPNYFTCRRARIRDRKPQQIFVDEGHTVHFVCRADGDPPPAIMWLSPRKHLISTKTNGRLTVFPDGTLEVRYAQIQDNGTYLCIASNAGGNDTMLAHLHVRSYSPDWPHQPNKTFAFISNQPNESDANSTRATVPFPFDIKTLIIATTMGFISFLGVVLFCLVLLFLWSRGKGNTKHNIEIEYVPRKSDAGISSADAPRKFNMKMI.

The N-terminal stretch at 1 to 34 (MLAGEASMRSPILACWQPILLLMLGSILSGSATG) is a signal peptide. 2 cysteine pairs are disulfide-bonded: Cys-35–Cys-41 and Cys-39–Cys-50. The LRRNT domain maps to 35–64 (CPPRCECSAQERAVLCHRKRFMVVPEGIPT). Residues 35 to 554 (CPPRCECSAQ…FDIKTLIIAT (520 aa)) lie on the Extracellular side of the membrane. LRR repeat units follow at residues 65–86 (ETRQLDLGKNRIKTLNQDEFAN), 89–110 (HLEELELNENIISAIEPGAFNN), 113–134 (NLRTLGLRSNRLKLIPLGVFTG), 137–158 (NLTKLDISENKIVILLDYMFQD), 161–182 (NLKSLEVGDNDLVYISHRAFSG), 185–206 (SLEQLTLEKCNLTSIPTEALSH), 209–230 (GLIVLRLRHLNINAIRDYSFKR), 257–278 (NLTSLSITHCNLTSIPYVSVRH), 281–302 (YLRFLNLSYNPIVTIEGSMLHD), 305–326 (RLQEIQLVGGQLTTVEPFAFRG), and 329–350 (YLRILNVSGNLLTTLEESAFHS). Asn-137 carries an N-linked (GlcNAc...) asparagine glycan. Asn-195 carries N-linked (GlcNAc...) asparagine glycosylation. N-linked (GlcNAc...) asparagine glycans are attached at residues Asn-257, Asn-267, and Asn-286. Residue Asn-334 is glycosylated (N-linked (GlcNAc...) asparagine). Residues 362–416 (NPLACDCRLLWVFRRRWRLNFNKQQPTCSTPEFVQGKEFKDFPDVLLPNYFTCRR) form the LRRCT domain. 3 disulfides stabilise this stretch: Cys-366/Cys-389, Cys-368/Cys-414, and Cys-439/Cys-490. Residues 404 to 508 (PDVLLPNYFT…DTMLAHLHVR (105 aa)) enclose the Ig-like C2-type domain. Asn-485, Asn-498, Asn-519, Asn-530, and Asn-535 each carry an N-linked (GlcNAc...) asparagine glycan. A helical membrane pass occupies residues 555–575 (TMGFISFLGVVLFCLVLLFLW). Topologically, residues 576-613 (SRGKGNTKHNIEIEYVPRKSDAGISSADAPRKFNMKMI) are cytoplasmic.

As to quaternary structure, homotetramer. Forms ternary complex with RTN4R/NGFR and RTN4R/TNFRSF19. In terms of processing, N-glycosylated. Contains predominantly high-mannose glycans.

It localises to the cell membrane. Functionally, functional component of the Nogo receptor signaling complex (RTN4R/NGFR) in RhoA activation responsible for some inhibition of axonal regeneration by myelin-associated factors. Is also an important negative regulator of oligodentrocyte differentiation and axonal myelination. The polypeptide is Leucine-rich repeat and immunoglobulin-like domain-containing nogo receptor-interacting protein 1 (LINGO1) (Gallus gallus (Chicken)).